Reading from the N-terminus, the 399-residue chain is Centrosomal protein 43 (399 aa).

The LisH domain maps to 70–102 (DGRLVASLVAEFLQFFNLDFTLAVFQPETSTFQ). Threonine 143 is subject to Phosphothreonine. Positions 143–311 (TSGEGALDLS…LKESESKRGN (169 aa)) are disordered. Phosphoserine occurs at positions 152, 156, 160, and 202. A compositionally biased stretch (low complexity) spans 197–209 (NDASHSDTSISSS). Acidic residues predominate over residues 245–256 (PEEDDLEGDSFF). The segment covering 286–302 (APPLKSGLSSLAGAPSL) has biased composition (low complexity). Serine 301 and serine 326 each carry phosphoserine. The segment at 328–357 (GLGTGEEDDYVDDFNSTSHRSEKSELSIGE) is disordered. Tyrosine 337 is modified (phosphotyrosine).

Belongs to the CEP43 family. As to quaternary structure, homodimer. Part of a ternary complex that contains CEP350, CEP43 and MAPRE1. Interacts directly with CEP350 and MAPRE1. Interacts with CEP19. Interacts (via N-terminus) with CEP350 (via C-terminus).

It localises to the cytoplasm. The protein resides in the cytoskeleton. The protein localises to the microtubule organizing center. Its subcellular location is the centrosome. It is found in the centriole. It localises to the cilium basal body. In terms of biological role, required for anchoring microtubules to the centrosomes. Required for ciliation. The sequence is that of Centrosomal protein 43 (CEP43) from Bos taurus (Bovine).